The primary structure comprises 149 residues: General odorant-binding protein 99b (149 aa).

Positions 1–16 (MKVLIVLLLGLAFVLA) are cleaved as a signal peptide. Cystine bridges form between cysteine 40/cysteine 71, cysteine 67/cysteine 125, and cysteine 114/cysteine 134.

This sequence belongs to the PBP/GOBP family. As to expression, expressed in adult olfactory system. Expressed in subsets of sensilla in both olfactory organs, the maxillary palps, and third antennal segments.

It is found in the secreted. Its function is as follows. Present in the aqueous fluid surrounding olfactory sensory dendrites and are thought to aid in the capture and transport of hydrophobic odorants into and through this fluid. This chain is General odorant-binding protein 99b (Obp99b), found in Drosophila melanogaster (Fruit fly).